The primary structure comprises 173 residues: Translocon-associated protein subunit delta (173 aa).

An N-terminal signal peptide occupies residues 1-23 (MAAMASFGALALLLLSGLSCCSA). Residues 24–144 (EACLEPQITP…SVDHRGTWNG (121 aa)) lie on the Lumenal side of the membrane. A disulfide bridge links C26 with C57. A Glycyl lysine isopeptide (Lys-Gly) (interchain with G-Cter in ubiquitin) cross-link involves residue K73. Residues 145 to 165 (PWVSTEVLAAAIGIVIYYLAF) traverse the membrane as a helical segment. Residues 166 to 173 (SAKSHIQA) are Cytoplasmic-facing.

It belongs to the TRAP-delta family. In terms of assembly, heterotetramer of TRAP-alpha, TRAP-beta, TRAP-delta and TRAP-gamma.

It localises to the endoplasmic reticulum membrane. Its function is as follows. TRAP proteins are part of a complex whose function is to bind calcium to the ER membrane and thereby regulate the retention of ER resident proteins. This is Translocon-associated protein subunit delta (Ssr4) from Rattus norvegicus (Rat).